The sequence spans 87 residues: U3-theraphotoxin-Cg1b (87 aa).

Positions 1 to 23 (MRTFTLIAILTCAVLVIFHVSAA) are cleaved as a signal peptide. Residues 24–48 (EELEAQDVIQPEDIFTGVATLEEDR) constitute a propeptide that is removed on maturation. 3 disulfide bridges follow: Cys52–Cys65, Cys56–Cys79, and Cys73–Cys84.

This sequence belongs to the neurotoxin 12 (Hwtx-2) family. 03 (juruin) subfamily. In terms of tissue distribution, expressed by the venom gland.

The protein localises to the secreted. In terms of biological role, probable ion channel inhibitor. This is U3-theraphotoxin-Cg1b from Chilobrachys guangxiensis (Chinese earth tiger tarantula).